Here is a 147-residue protein sequence, read N- to C-terminus: F420H(2)-dependent reductase Rv1155 (147 aa).

Coenzyme F420-(gamma-Glu)n is bound by residues Gln-32, Gln-37, Ser-50, 56-60 (AKTRN), 77-79 (WSY), and His-138.

The protein belongs to the F420H(2)-dependent biliverdin reductase family. In terms of assembly, homodimer.

Functionally, F420H(2)-dependent reductase able to catalyze the reduction of biliverdin-IXalpha to bilirubin-IXalpha in vitro. However, kinetic parameters show that it is less efficient than the biliverdin reductase Rv2074 and suggest biliverdin-IXalpha is unlikely to be the native substrate of Rv1155, which probably catalyzes the reduction of an alternative molecule in vivo. Binds coenzyme F420, but does not bind FMN or other flavins. Cannot use pyridoxine 5'-phosphate, pyridoxamine 5'-phosphate, pyridoxal 5'-phosphate (PLP), the anti-tuberculosis drug PA-824 or aflatoxin analogs as substrates. The protein is F420H(2)-dependent reductase Rv1155 of Mycobacterium tuberculosis (strain ATCC 25618 / H37Rv).